We begin with the raw amino-acid sequence, 108 residues long: UPF0145 protein LACR_1006 (108 aa).

Belongs to the UPF0145 family.

In Lactococcus lactis subsp. cremoris (strain SK11), this protein is UPF0145 protein LACR_1006.